Here is a 61-residue protein sequence, read N- to C-terminus: Protein YncO (61 aa).

A helical transmembrane segment spans residues 18–38 (HVFLYVFYIFLFLVLFIMTIY).

The protein localises to the cell inner membrane. The protein is Protein YncO of Escherichia coli (strain K12).